Reading from the N-terminus, the 156-residue chain is MSRRKNIKKRPIPPDPVYNSYLINMTIRRVMRSGKKSLASNIIYDALKTVGERTGRDPLEVFEQAVKNATPLVEVKARRVGGATYQVPMEVRPGRGTTLALRWLIQFSRSRSGRTMAGKLANEIMDAANETGGAIKKREETHRMAEANKAFAHYRY.

Belongs to the universal ribosomal protein uS7 family. In terms of assembly, part of the 30S ribosomal subunit. Contacts proteins S9 and S11.

Its function is as follows. One of the primary rRNA binding proteins, it binds directly to 16S rRNA where it nucleates assembly of the head domain of the 30S subunit. Is located at the subunit interface close to the decoding center, probably blocks exit of the E-site tRNA. This Gloeothece citriformis (strain PCC 7424) (Cyanothece sp. (strain PCC 7424)) protein is Small ribosomal subunit protein uS7.